A 463-amino-acid polypeptide reads, in one-letter code: Probable Xaa-Pro aminopeptidase PEPP (463 aa).

4 residues coordinate Mn(2+): aspartate 259, aspartate 270, glutamate 393, and glutamate 433.

The protein belongs to the peptidase M24B family. The cofactor is Mn(2+).

The catalysed reaction is Release of any N-terminal amino acid, including proline, that is linked to proline, even from a dipeptide or tripeptide.. Catalyzes the removal of a penultimate prolyl residue from the N-termini of peptides. The protein is Probable Xaa-Pro aminopeptidase PEPP (PEPP) of Phaeosphaeria nodorum (strain SN15 / ATCC MYA-4574 / FGSC 10173) (Glume blotch fungus).